The following is a 419-amino-acid chain: Peptide chain release factor subunit 1 (419 aa).

This sequence belongs to the eukaryotic release factor 1 family. As to quaternary structure, heterodimer of two subunits, one of which binds GTP.

Its subcellular location is the cytoplasm. In terms of biological role, directs the termination of nascent peptide synthesis (translation) in response to the termination codons UAA, UAG and UGA. This is Peptide chain release factor subunit 1 from Methanococcus maripaludis (strain DSM 14266 / JCM 13030 / NBRC 101832 / S2 / LL).